We begin with the raw amino-acid sequence, 977 residues long: Disks large-associated protein 3 (977 aa).

The span at 1-10 shows a compositional bias: basic and acidic residues; the sequence is MRGYHGDRGS. 6 disordered regions span residues 1–24, 52–96, 137–167, 181–289, 398–417, and 529–582; these read MRGY…QHMD, AGLG…MYPG, FHTL…ESPS, AKSH…CLDA, AMGD…SPKA, and PGSS…SADG. Low complexity predominate over residues 53–73; sequence GLGHLSPEGPLSLSEGPSSVG. Phosphoserine is present on serine 58. A compositionally biased stretch (gly residues) spans 74–87; that stretch reads PEGGPGGVGAGGGS. Residues 189 to 201 are compositionally biased toward basic and acidic residues; that stretch reads PGKRDYNGPKADG. Residues 221–245 are compositionally biased toward basic residues; it reads SHHHHHHHHHHHHQSRHGKRSKSKD. Residues 258 to 271 show a composition bias toward low complexity; it reads GWWSSDDNLDSDSG. Phosphoserine occurs at positions 404, 407, 410, and 414. Residues 538-547 are compositionally biased toward pro residues; it reads APPPIPPGSQ. Serine 641 and serine 643 each carry phosphoserine. Disordered regions lie at residues 739–788 and 906–939; these read EGYP…RTSP and EEKK…RQRQ. Composition is skewed to basic and acidic residues over residues 767-777 and 925-939; these read GRRDSWMERGS and PVKE…RQRQ. Residues serine 930, serine 933, and serine 965 each carry the phosphoserine modification.

The protein belongs to the SAPAP family. As to quaternary structure, interacts with DLG4/PSD-95. Highly expressed in central and peripherical nervous system (at protein level).

The protein resides in the cell membrane. It localises to the postsynaptic density. It is found in the synapse. Its function is as follows. May play a role in the molecular organization of synapses and neuronal cell signaling. Could be an adapter protein linking ion channel to the subsynaptic cytoskeleton. May induce enrichment of PSD-95/SAP90 at the plasma membrane. The polypeptide is Disks large-associated protein 3 (Dlgap3) (Mus musculus (Mouse)).